An 880-amino-acid chain; its full sequence is Alanine--tRNA ligase (880 aa).

The Zn(2+) site is built by His-569, His-573, Cys-671, and His-675.

Belongs to the class-II aminoacyl-tRNA synthetase family. As to quaternary structure, homotetramer. Requires Zn(2+) as cofactor.

The protein resides in the cytoplasm. It catalyses the reaction tRNA(Ala) + L-alanine + ATP = L-alanyl-tRNA(Ala) + AMP + diphosphate. Catalyzes the attachment of alanine to tRNA(Ala) in a two-step reaction: alanine is first activated by ATP to form Ala-AMP and then transferred to the acceptor end of tRNA(Ala). Also edits incorrectly charged Ser-tRNA(Ala) and Gly-tRNA(Ala) via its editing domain. The chain is Alanine--tRNA ligase from Buchnera aphidicola subsp. Baizongia pistaciae (strain Bp).